Here is an 88-residue protein sequence, read N- to C-terminus: UPF0297 protein Bcer98_3100 (88 aa).

Belongs to the UPF0297 family.

The sequence is that of UPF0297 protein Bcer98_3100 from Bacillus cytotoxicus (strain DSM 22905 / CIP 110041 / 391-98 / NVH 391-98).